The primary structure comprises 262 residues: 2-keto-4-pentenoate hydratase (262 aa).

This sequence belongs to the hydratase/decarboxylase family. MhpD subfamily. The cofactor is a divalent metal cation.

The catalysed reaction is (S)-4-hydroxy-2-oxopentanoate = (2Z)-2-hydroxypenta-2,4-dienoate + H2O. Its pathway is aromatic compound metabolism; 3-phenylpropanoate degradation. Catalyzes the conversion of 2-hydroxypentadienoic acid (enolic form of 2-oxopent-4-enoate) to 4-hydroxy-2-ketopentanoic acid. This chain is 2-keto-4-pentenoate hydratase, found in Burkholderia vietnamiensis (strain G4 / LMG 22486) (Burkholderia cepacia (strain R1808)).